The following is a 269-amino-acid chain: Adenosylcobinamide-GDP ribazoletransferase (269 aa).

The next 6 membrane-spanning stretches (helical) occupy residues 63–83 (SAYY…LLYL), 87–107 (LPPG…TGML), 137–157 (VGAF…SLLG), 158–178 (AGLP…VVLM), 202–222 (LAFL…AALV), and 246–266 (VYGL…GWGF).

Belongs to the CobS family. Mg(2+) is required as a cofactor.

Its subcellular location is the cell membrane. It catalyses the reaction alpha-ribazole + adenosylcob(III)inamide-GDP = adenosylcob(III)alamin + GMP + H(+). The enzyme catalyses alpha-ribazole 5'-phosphate + adenosylcob(III)inamide-GDP = adenosylcob(III)alamin 5'-phosphate + GMP + H(+). It participates in cofactor biosynthesis; adenosylcobalamin biosynthesis; adenosylcobalamin from cob(II)yrinate a,c-diamide: step 7/7. Functionally, joins adenosylcobinamide-GDP and alpha-ribazole to generate adenosylcobalamin (Ado-cobalamin). Also synthesizes adenosylcobalamin 5'-phosphate from adenosylcobinamide-GDP and alpha-ribazole 5'-phosphate. This Deinococcus radiodurans (strain ATCC 13939 / DSM 20539 / JCM 16871 / CCUG 27074 / LMG 4051 / NBRC 15346 / NCIMB 9279 / VKM B-1422 / R1) protein is Adenosylcobinamide-GDP ribazoletransferase.